A 120-amino-acid chain; its full sequence is MSEAITSARATARFVRVSPMKARRVIDLVRGKSVEEALAILKYAPQAASEPVAKVVASAAANAENNFGLDRRSLVVSEAFADEGPTMRRFSPRAQGRAFQIRKRTSHITIVVESQKEGAK.

The protein belongs to the universal ribosomal protein uL22 family. As to quaternary structure, part of the 50S ribosomal subunit.

This protein binds specifically to 23S rRNA; its binding is stimulated by other ribosomal proteins, e.g. L4, L17, and L20. It is important during the early stages of 50S assembly. It makes multiple contacts with different domains of the 23S rRNA in the assembled 50S subunit and ribosome. Functionally, the globular domain of the protein is located near the polypeptide exit tunnel on the outside of the subunit, while an extended beta-hairpin is found that lines the wall of the exit tunnel in the center of the 70S ribosome. The protein is Large ribosomal subunit protein uL22 of Corynebacterium diphtheriae (strain ATCC 700971 / NCTC 13129 / Biotype gravis).